Here is a 1403-residue protein sequence, read N- to C-terminus: E3 ubiquitin-protein ligase SNT2 (1403 aa).

Residues Ser-40–Ala-62 are disordered. A compositionally biased stretch (polar residues) spans Lys-45–Ala-62. The region spanning Val-121–Tyr-258 is the BAH domain. The PHD-type 1 zinc finger occupies Asp-317 to Lys-369. The 52-residue stretch at Leu-555–Arg-606 folds into the SANT domain. The PHD-type 2 zinc-finger motif lies at Arg-1038–Asp-1097. The segment at Cys-1041–Ser-1095 adopts an RING-type; degenerate zinc-finger fold. Residues Thr-1105–Ile-1153 form a C2HC pre-PHD-type zinc finger. The segment at Phe-1177–Val-1231 adopts a PHD-type 3; degenerate zinc-finger fold.

In terms of assembly, component of the Snt2C complex composed of SNT2, ECM5 and RPD3. Interacts with the E2 ubiquitin-conjugating enzyme UBC4 and histones H3 and H4. Binding is enhanced to methylated histone H3K36me3.

Its subcellular location is the cytoplasm. It is found in the nucleus. It catalyses the reaction S-ubiquitinyl-[E2 ubiquitin-conjugating enzyme]-L-cysteine + [acceptor protein]-L-lysine = [E2 ubiquitin-conjugating enzyme]-L-cysteine + N(6)-ubiquitinyl-[acceptor protein]-L-lysine.. Functionally, transcriptional regulator that, together with ECM5, recruits histone deacetylase RPD3 to a small number of promoters of stress-response genes in response to oxidative stress. Probable ubiquitin-protein ligase involved in the degradation-related ubiquitination of histones. Contributes to the post-translational regulation of histone protein levels by polyubiquitination of excess histones for subsequent degradation. This Saccharomyces cerevisiae (strain ATCC 204508 / S288c) (Baker's yeast) protein is E3 ubiquitin-protein ligase SNT2.